Here is a 206-residue protein sequence, read N- to C-terminus: Ras-related protein Ral-B (206 aa).

GTP is bound at residue 21-29 (GSGGVGKSA). The Effector region motif lies at 43-51 (YEPTKADSY). Residues 68 to 72 (DTAGQ), 128 to 131 (NKSD), and 158 to 160 (SAK) contribute to the GTP site. Basic and acidic residues predominate over residues 180–189 (KMSENKDKNG). A disordered region spans residues 180-206 (KMSENKDKNGKKSGKNKKSFKERCCLL). At cysteine 203 the chain carries Cysteine methyl ester. Cysteine 203 carries the S-geranylgeranyl cysteine lipid modification. The propeptide at 204–206 (CLL) is removed in mature form.

Belongs to the small GTPase superfamily. Ras family. Interacts with EXOC2/Sec5 and EXOC8/Exo84. Interacts (via effector domain) with RALBP1. Prenylation is essential for membrane localization. Post-translationally, the farnesylated form confers resistance to the proapoptotic and anti-anchorage-dependent growth effects of some geranylgeranyltransferase I inhibitors.

The protein localises to the cell membrane. It is found in the midbody. The enzyme catalyses GTP + H2O = GDP + phosphate + H(+). Its activity is regulated as follows. Alternates between an inactive form bound to GDP and an active form bound to GTP. Activated by a guanine nucleotide-exchange factor (GEF) and inactivated by a GTPase-activating protein (GAP). Its function is as follows. Multifunctional GTPase involved in a variety of cellular processes including gene expression, cell migration, cell proliferation, oncogenic transformation and membrane trafficking. Accomplishes its multiple functions by interacting with distinct downstream effectors. Acts as a GTP sensor for GTP-dependent exocytosis of dense core vesicles. Required both to stabilize the assembly of the exocyst complex and to localize functional exocyst complexes to the leading edge of migrating cells. Required for suppression of apoptosis. In late stages of cytokinesis, upon completion of the bridge formation between dividing cells, mediates exocyst recruitment to the midbody to drive abscission. Involved in ligand-dependent receptor mediated endocytosis of the EGF and insulin receptors. In Macaca fascicularis (Crab-eating macaque), this protein is Ras-related protein Ral-B (RALB).